A 572-amino-acid polypeptide reads, in one-letter code: Proline--tRNA ligase (572 aa).

This sequence belongs to the class-II aminoacyl-tRNA synthetase family. ProS type 1 subfamily. As to quaternary structure, homodimer.

The protein localises to the cytoplasm. It catalyses the reaction tRNA(Pro) + L-proline + ATP = L-prolyl-tRNA(Pro) + AMP + diphosphate. Catalyzes the attachment of proline to tRNA(Pro) in a two-step reaction: proline is first activated by ATP to form Pro-AMP and then transferred to the acceptor end of tRNA(Pro). As ProRS can inadvertently accommodate and process non-cognate amino acids such as alanine and cysteine, to avoid such errors it has two additional distinct editing activities against alanine. One activity is designated as 'pretransfer' editing and involves the tRNA(Pro)-independent hydrolysis of activated Ala-AMP. The other activity is designated 'posttransfer' editing and involves deacylation of mischarged Ala-tRNA(Pro). The misacylated Cys-tRNA(Pro) is not edited by ProRS. The sequence is that of Proline--tRNA ligase from Yersinia pseudotuberculosis serotype IB (strain PB1/+).